Reading from the N-terminus, the 451-residue chain is Tubulin gamma-1 chain (451 aa).

Serine 131 carries the post-translational modification Phosphoserine; by BRSK1. Position 142 to 148 (alanine 142 to glycine 148) interacts with GTP.

This sequence belongs to the tubulin family. Component of the gamma-tubulin ring complex (gTuRC) consisting of TUBGCP2, TUBGCP3, TUBGCP4, TUBGCP5 and TUBGCP6 and gamma-tubulin TUBG1 or TUBG2. TUBGCP2, TUBGCP3, TUBGCP4, TUBGCP5 and TUBGCP6 assemble in a 5:5:2:1:1 stoichiometry; each is associated with a gamma-tubulin, thereby arranging 14 gamma-tubulins in a helical manner. Gamma-tubulin at the first position is blocked by TUBGCP3 at the last position, allowing 13 protafilaments to grow into a microtubule. The gTuRC (via TUBGCP3 and TUBGCP6) interacts with ACTB and MZT1; the interactions form a luminal bridge that stabilizes the initial structure during complex assembly. The gTuRC (via TUBGCP2) interacts with MZT2A/MZT2B and CDK5RAP2 (via CM1 motif); the interactions play a role in gTuRC activation. Interacts with alpha-beta tubulin heterodimers; the interaction allows microtubules to nucleate from the gTuRC. Interacts with B9D2. Interacts with CDK5RAP2; the interaction is leading to centrosomal localization of TUBG1 and CDK5RAP2. Interacts with CIMAP3. Interacts with SAS6 and NUP62 at the centrosome. Interacts with EML3 (phosphorylated at 'Thr-881') and HAUS8. Interacts with DNM2; this interaction may participate in centrosome cohesion. Interacts with CCDC66. In terms of processing, phosphorylation at Ser-131 by BRSK1 regulates centrosome duplication, possibly by mediating relocation of gamma-tubulin and its associated proteins from the cytoplasm to the centrosome.

Its subcellular location is the cytoplasm. It is found in the cytoskeleton. It localises to the microtubule organizing center. The protein resides in the centrosome. The protein localises to the spindle. Tubulin is the major constituent of microtubules, protein filaments consisting of alpha- and beta-tubulin heterodimers. Gamma-tubulin is a key component of the gamma-tubulin ring complex (gTuRC) which mediates microtubule nucleation. The gTuRC regulates the minus-end nucleation of alpha-beta tubulin heterodimers that grow into microtubule protafilaments, a critical step in centrosome duplication and spindle formation. The protein is Tubulin gamma-1 chain of Canis lupus familiaris (Dog).